A 1025-amino-acid polypeptide reads, in one-letter code: Multidrug resistance protein MdtC (1025 aa).

12 helical membrane-spanning segments follow: residues 3–23, 333–353, 360–380, 387–407, 431–451, 463–483, 528–548, 853–873, 875–895, 897–917, 953–973, and 984–1004; these read FFALFIYRPVATILLSVAITL, EVEQTLIISVALVILVVFLFL, IIPAVAVPVSLIGTFAAMYLC, LSLMALTIATGFVVDDAIVVL, VGFTVLSMSLSLVAVFLPLLL, FAVTLSVAIGISLLVSLTLTP, LVGVVLLGTIALNIWLYISIP, VILIIAAIATVYIVLGILYES, VHPLTILSTLPSAGVGALLAL, LFNAPFSLIALIGIMLLIGIV, PIMMTTLAALFGALPLVLSGG, and ITIVGGLVMSQLLTLYTTPVV.

This sequence belongs to the resistance-nodulation-cell division (RND) (TC 2.A.6) family. MdtC subfamily. As to quaternary structure, part of a tripartite efflux system composed of MdtA, MdtB and MdtC. MdtC forms a heteromultimer with MdtB.

It localises to the cell inner membrane. This chain is Multidrug resistance protein MdtC, found in Shigella boydii serotype 4 (strain Sb227).